Reading from the N-terminus, the 389-residue chain is Succinate--CoA ligase [ADP-forming] subunit beta (389 aa).

The ATP-grasp domain maps to 9 to 236 (KELFASHGVP…KDAEDPLEAK (228 aa)). ATP-binding positions include Lys45, 52–54 (GRG), Ser94, and Glu99. Residues Asn191 and Asp205 each contribute to the Mg(2+) site. Substrate is bound by residues Asn256 and 318–320 (GIT).

This sequence belongs to the succinate/malate CoA ligase beta subunit family. As to quaternary structure, heterotetramer of two alpha and two beta subunits. The cofactor is Mg(2+).

The catalysed reaction is succinate + ATP + CoA = succinyl-CoA + ADP + phosphate. It catalyses the reaction GTP + succinate + CoA = succinyl-CoA + GDP + phosphate. It participates in carbohydrate metabolism; tricarboxylic acid cycle; succinate from succinyl-CoA (ligase route): step 1/1. Its function is as follows. Succinyl-CoA synthetase functions in the citric acid cycle (TCA), coupling the hydrolysis of succinyl-CoA to the synthesis of either ATP or GTP and thus represents the only step of substrate-level phosphorylation in the TCA. The beta subunit provides nucleotide specificity of the enzyme and binds the substrate succinate, while the binding sites for coenzyme A and phosphate are found in the alpha subunit. This chain is Succinate--CoA ligase [ADP-forming] subunit beta, found in Saccharopolyspora erythraea (strain ATCC 11635 / DSM 40517 / JCM 4748 / NBRC 13426 / NCIMB 8594 / NRRL 2338).